Consider the following 185-residue polypeptide: Elongation factor P (185 aa).

Belongs to the elongation factor P family.

Its subcellular location is the cytoplasm. The protein operates within protein biosynthesis; polypeptide chain elongation. Involved in peptide bond synthesis. Stimulates efficient translation and peptide-bond synthesis on native or reconstituted 70S ribosomes in vitro. Probably functions indirectly by altering the affinity of the ribosome for aminoacyl-tRNA, thus increasing their reactivity as acceptors for peptidyl transferase. This is Elongation factor P from Nitratidesulfovibrio vulgaris (strain DP4) (Desulfovibrio vulgaris).